A 67-amino-acid polypeptide reads, in one-letter code: Probable tautomerase bsl7456 (67 aa).

P2 acts as the Proton acceptor; via imino nitrogen in catalysis.

Belongs to the 4-oxalocrotonate tautomerase family.

The sequence is that of Probable tautomerase bsl7456 from Bradyrhizobium diazoefficiens (strain JCM 10833 / BCRC 13528 / IAM 13628 / NBRC 14792 / USDA 110).